The chain runs to 529 residues: MAEVSLTKKEMTTKGKSENSKKMKTDMADMVPIAAMNEDLLHNILLRLPAKSFAFASCVNRFWSSVCNRILSRPKMISAFSRNPDQLRAGEEVLDKVLSEPIRPQFVIANITCGNMEETLTLITERVGSRVPIIVSVVTGILGKEACNDKAGEVRLHSTSDDELFDVANFAILLTIGYLPGMKVDIIPVIQAKGESGAEMEDKFVMDIRNYMSMVSGHAAAPACLILFAEDTHATEPVLHKLDYAMPAETVIVGGQIGEFLHKRGNEPRNVQLQKDDIRVLAGLIFARDRHRPAQAERIQFDTAISNGMSSVDLRYKAANVNVSLGPSCPSTLLTAKRRGEAEVLDGDQILDDIDNILENYIWENDSYLGVIKRRKYSIGLEEKPKIMSSLVFHQVNGSDDQDLLVDGAGIKTGDQFQVYLPDLKVAEAALNDVSAQLRNLKSKPNKPEVVGGFAFVGSCRGDSFFGCPNADSSPFLENFPELPFGGIFCDGEIGRSLILEEGEEKKEVSIQRFLHVYSSVYLIVSYTS.

Positions 1 to 22 (MAEVSLTKKEMTTKGKSENSKK) are disordered. The 48-residue stretch at 31–78 (VPIAAMNEDLLHNILLRLPAKSFAFASCVNRFWSSVCNRILSRPKMIS) folds into the F-box domain. LRR repeat units follow at residues 265-288 (GNEP…IFAR) and 418-441 (QVYL…LRNL).

In Arabidopsis thaliana (Mouse-ear cress), this protein is F-box/LRR-repeat protein At5g63520.